Consider the following 283-residue polypeptide: Undecaprenyl-diphosphatase (283 aa).

6 helical membrane-spanning segments follow: residues 47 to 67, 94 to 114, 127 to 147, 197 to 217, 227 to 247, and 261 to 281; these read PGLSVTAVIQLGSIVAVIAYF, LGIAMLIGTLPILIAGLCIKL, VPAIAVVSIVMALLLGFAELL, AARFSFLLGIPAITIAGLVEL, GGVLPVFVGICSAAVVSWLAI, and IFVVYRLLFGVLLLVWWSGSA.

Belongs to the UppP family.

It is found in the cell inner membrane. The catalysed reaction is di-trans,octa-cis-undecaprenyl diphosphate + H2O = di-trans,octa-cis-undecaprenyl phosphate + phosphate + H(+). In terms of biological role, catalyzes the dephosphorylation of undecaprenyl diphosphate (UPP). Confers resistance to bacitracin. The chain is Undecaprenyl-diphosphatase from Synechococcus sp. (strain CC9311).